A 407-amino-acid chain; its full sequence is Putative D-cysteine desulfhydrase 2, mitochondrial (407 aa).

A mitochondrion-targeting transit peptide spans Met-1 to Thr-34. The tract at residues Pro-39–Pro-72 is disordered. An N6-(pyridoxal phosphate)lysine modification is found at Lys-90.

This sequence belongs to the ACC deaminase/D-cysteine desulfhydrase family. The cofactor is pyridoxal 5'-phosphate.

The protein localises to the mitochondrion. It catalyses the reaction D-cysteine + H2O = hydrogen sulfide + pyruvate + NH4(+) + H(+). Catalyzes the production of hydrogen sulfide (H2S) from cysteine. In Oryza sativa subsp. japonica (Rice), this protein is Putative D-cysteine desulfhydrase 2, mitochondrial.